We begin with the raw amino-acid sequence, 135 residues long: Cytochrome b-c1 complex subunit 6, mitochondrial (135 aa).

The segment at 1 to 70 (MSFFRDLLES…ETADPLDTLR (70 aa)) is disordered. Residues 19–64 (EPVEDVEVEQPEDAPEEEVSEETVEEEEDDDEDDDEDDEEEEETAD) show a composition bias toward acidic residues.

Belongs to the UQCRH/QCR6 family. Component of the ubiquinol-cytochrome c oxidoreductase (cytochrome b-c1 complex, complex III, CIII), a multisubunit enzyme composed of 10 subunits. The complex is composed of 3 respiratory subunits cytochrome b (COB), cytochrome c1 (CYT1) and Rieske protein (RIP1), 2 core protein subunits COR1 and QCR2, and 5 low-molecular weight protein subunits QCR6, QCR7, QCR8, QCR9 and QCR10. The complex exists as an obligatory dimer and forms supercomplexes (SCs) in the inner mitochondrial membrane with a monomer or a dimer of cytochrome c oxidase (complex IV, CIV), resulting in 2 different assemblies (supercomplexes III(2)IV and III(2)IV(2)).

Its subcellular location is the mitochondrion inner membrane. Functionally, component of the ubiquinol-cytochrome c oxidoreductase, a multisubunit transmembrane complex that is part of the mitochondrial electron transport chain which drives oxidative phosphorylation. The complex plays an important role in the uptake of multiple carbon sources present in different host niches. The chain is Cytochrome b-c1 complex subunit 6, mitochondrial from Candida albicans (strain SC5314 / ATCC MYA-2876) (Yeast).